The chain runs to 218 residues: N-(5'-phosphoribosyl)anthranilate isomerase (218 aa).

Belongs to the TrpF family.

It catalyses the reaction N-(5-phospho-beta-D-ribosyl)anthranilate = 1-(2-carboxyphenylamino)-1-deoxy-D-ribulose 5-phosphate. It functions in the pathway amino-acid biosynthesis; L-tryptophan biosynthesis; L-tryptophan from chorismate: step 3/5. The sequence is that of N-(5'-phosphoribosyl)anthranilate isomerase from Acetivibrio thermocellus (strain ATCC 27405 / DSM 1237 / JCM 9322 / NBRC 103400 / NCIMB 10682 / NRRL B-4536 / VPI 7372) (Clostridium thermocellum).